Here is a 344-residue protein sequence, read N- to C-terminus: C5a anaphylatoxin chemotactic receptor 2 (344 aa).

Residues 1–44 are Extracellular-facing; that stretch reads MMNHTTSEYYDYEYDHEHYSDLPDVPVDCPAGTCFTSDVYLIVL. Asparagine 3 carries N-linked (GlcNAc...) asparagine glycosylation. The chain crosses the membrane as a helical span at residues 45–67; that stretch reads LVLYAAVFLVGVPGNTLVAWVTW. Over 68 to 78 the chain is Cytoplasmic; sequence KESRHRLGASW. The helical transmembrane segment at 79–101 threads the bilayer; it reads FLHLTMADLLCCVSLPFLAVPIA. Topologically, residues 102–120 are extracellular; sequence QKGHWPYGAAGCWLLSSIT. Cysteine 113 and cysteine 192 are disulfide-bonded. The chain crosses the membrane as a helical span at residues 121-143; sequence ILSMYASVLLLTGLSGDLFLLAF. The Cytoplasmic segment spans residues 144-155; sequence RPSWKGADHRTF. Residues 156–178 traverse the membrane as a helical segment; sequence GVRVVQASSWMLGLLLTVPSAVY. Over 179–208 the chain is Extracellular; it reads RRLLQEHYPPRLVCGIDYGGSVSAEVAITT. Residues 209-231 traverse the membrane as a helical segment; the sequence is VRFLFGFLGPLVFMAGCHGILQR. Topologically, residues 232–243 are cytoplasmic; that stretch reads QMARRHWPLGTA. A helical membrane pass occupies residues 244-266; that stretch reads VVVGFFICWTPYHVLRVIIAAAP. The Extracellular segment spans residues 267 to 280; sequence PHSLLLARVLEAEP. A helical membrane pass occupies residues 281 to 300; sequence LFNGLALAHSALNPIMFLYF. Topologically, residues 301–344 are cytoplasmic; sequence GRKQLCKSLQAACHWALRDPQDEESAVTKVSISTSHEMVSEMPV. Serine 325 bears the Phosphoserine mark.

Belongs to the G-protein coupled receptor 1 family. In terms of assembly, interacts with C3 (the anaphylatoxin peptide C3a and the adipogenic hormone ASP); the interaction occurs with higher affinity for ASP, enhancing the phosphorylation and activation of GPR77, recruitment of ARRB2 to the cell surface and endocytosis of GRP77. As to expression, highly expressed in liver and spleen. Lower levels in intestine, brain and kidney. Also expressed in adipose tissues with highest levels in gonadal and ingual fat depots. Lower levels in brown tissue.

The protein resides in the cell membrane. Functionally, receptor for the chemotactic and inflammatory C3a, C4a and C5a anaphylatoxin peptides and also for their dearginated forms ASP/C3adesArg, C4adesArg and C5adesArg respectively. Couples weakly to G(i)-mediated signaling pathways. This Mus musculus (Mouse) protein is C5a anaphylatoxin chemotactic receptor 2 (C5ar2).